Here is a 541-residue protein sequence, read N- to C-terminus: Tyrosine-protein phosphatase non-receptor type 5 (541 aa).

The segment at 1-55 (MCCSERLLGLPQPVEMEAPDEAEGLPSKQKEMPPPPPPSPPSEPAQKLPPQGAGS) is disordered. Positions 32 to 43 (MPPPPPPSPPSE) are enriched in pro residues. 2 consecutive transmembrane segments (helical) span residues 64–84 (LCLFAASQFLLACGVLWLSGH) and 122–142 (LLLVSLTVSLVIVTTLVWHLL). Phosphoserine; by PKA is present on Ser221. Thr231 carries the post-translational modification Phosphothreonine; by MAPK. Residue Ser244 is modified to Phosphoserine; by MAPK. Residues 276–531 (LQAEFFEIPM…QFVHHAMSLY (256 aa)) enclose the Tyrosine-protein phosphatase domain. Residues Asp437, 472 to 478 (CSAGIGR), and Gln516 each bind substrate. Catalysis depends on Cys472, which acts as the Phosphocysteine intermediate.

It belongs to the protein-tyrosine phosphatase family. Non-receptor class subfamily. Phosphorylation at Ser-221 by PKA deactivates PTPN5. Phosphorylation at Thr-231 and Ser-244 by MAPKs stabilizes the phosphatase, dephosphorylation of these sites results in ubiquitin-mediated degradation of the active phosphatase. In terms of tissue distribution, STEP20 is expressed only in the CNS.

The protein resides in the endoplasmic reticulum membrane. Its subcellular location is the cytoplasm. The enzyme catalyses O-phospho-L-tyrosyl-[protein] + H2O = L-tyrosyl-[protein] + phosphate. Its function is as follows. May regulate the activity of several effector molecules involved in synaptic plasticity and neuronal cell survival, including MAPKs, Src family kinases and NMDA receptors. The chain is Tyrosine-protein phosphatase non-receptor type 5 (Ptpn5) from Mus musculus (Mouse).